A 442-amino-acid chain; its full sequence is Exodeoxyribonuclease 7 large subunit (442 aa).

This sequence belongs to the XseA family. As to quaternary structure, heterooligomer composed of large and small subunits.

It localises to the cytoplasm. The catalysed reaction is Exonucleolytic cleavage in either 5'- to 3'- or 3'- to 5'-direction to yield nucleoside 5'-phosphates.. Its function is as follows. Bidirectionally degrades single-stranded DNA into large acid-insoluble oligonucleotides, which are then degraded further into small acid-soluble oligonucleotides. This Shewanella sediminis (strain HAW-EB3) protein is Exodeoxyribonuclease 7 large subunit.